An 883-amino-acid polypeptide reads, in one-letter code: Phosphoenolpyruvate carboxylase (883 aa).

Catalysis depends on residues histidine 138 and lysine 546.

This sequence belongs to the PEPCase type 1 family. It depends on Mg(2+) as a cofactor.

The catalysed reaction is oxaloacetate + phosphate = phosphoenolpyruvate + hydrogencarbonate. In terms of biological role, forms oxaloacetate, a four-carbon dicarboxylic acid source for the tricarboxylic acid cycle. In Escherichia coli O127:H6 (strain E2348/69 / EPEC), this protein is Phosphoenolpyruvate carboxylase.